The following is a 315-amino-acid chain: Olfactory receptor 4A5 (315 aa).

Topologically, residues methionine 1–lysine 23 are extracellular. An N-linked (GlcNAc...) asparagine glycan is attached at asparagine 6. The helical transmembrane segment at alanine 24–isoleucine 47 threads the bilayer. The Cytoplasmic portion of the chain corresponds to isoleucine 48–serine 55. Residues proline 56–proline 77 traverse the membrane as a helical segment. Residues lysine 78 to glutamine 98 are Extracellular-facing. Cysteines 95 and 186 form a disulfide. The helical transmembrane segment at leucine 99–cysteine 118 threads the bilayer. The Cytoplasmic segment spans residues aspartate 119–glutamine 137. The chain crosses the membrane as a helical span at residues valine 138–phenylalanine 156. The Extracellular portion of the chain corresponds to glutamine 157 to isoleucine 192. Residues glycine 193–glycine 216 form a helical membrane-spanning segment. The Cytoplasmic portion of the chain corresponds to valine 217–lysine 232. The helical transmembrane segment at alanine 233–tyrosine 255 threads the bilayer. Residues valine 256–lysine 266 are Extracellular-facing. Residues phenylalanine 267–leucine 286 form a helical membrane-spanning segment. The Cytoplasmic segment spans residues arginine 287–methionine 315.

Belongs to the G-protein coupled receptor 1 family.

It is found in the cell membrane. Functionally, odorant receptor. In Homo sapiens (Human), this protein is Olfactory receptor 4A5 (OR4A5).